A 325-amino-acid chain; its full sequence is Probable cell division protein WhiA (325 aa).

The segment at residues 280 to 313 (SLKELGNMLEKPLGKSGVNHRLRKIDKIAEELRK) is a DNA-binding region (H-T-H motif).

The protein belongs to the WhiA family.

Involved in cell division and chromosome segregation. The sequence is that of Probable cell division protein WhiA from Caldicellulosiruptor bescii (strain ATCC BAA-1888 / DSM 6725 / KCTC 15123 / Z-1320) (Anaerocellum thermophilum).